We begin with the raw amino-acid sequence, 592 residues long: Putative D-/L-hydantoinase subunit B (592 aa).

This sequence belongs to the HyuB family. As to quaternary structure, may form a complex with HyuA.

Involved in the asymmetric conversion of racemic 5-substituted hydantoins to the corresponding L-amino acids. HyuA and HyuB are both required for the conversion of D- and L-5-substituted hydantoins to corresponding N-carbamoyl-D- and N-carbamoyl-L-amino acids, respectively. In Pseudomonas sp. (strain NS671), this protein is Putative D-/L-hydantoinase subunit B.